The sequence spans 85 residues: Large ribosomal subunit protein bL27 (85 aa).

Residues 1–23 (MAHKKGQGSTQNNRDSAGRRLGV) are disordered.

The protein belongs to the bacterial ribosomal protein bL27 family.

The protein is Large ribosomal subunit protein bL27 of Helicobacter hepaticus (strain ATCC 51449 / 3B1).